Reading from the N-terminus, the 311-residue chain is Probable protein phosphatase 2C 59 (311 aa).

Low complexity predominate over residues 1 to 14 (MGYLNSVLSSSSQV). Residues 1-26 (MGYLNSVLSSSSQVHSDDGPVSGGGL) form a disordered region. The PPM-type phosphatase domain occupies 33–279 (SYGYASSPGK…DNITCVVVRF (247 aa)). Mn(2+) contacts are provided by Asp69, Gly70, Asp231, and Asp270.

Belongs to the PP2C family. In terms of assembly, interacts with the Pseudomonas syringae pv. maculicola effector HopW1-1 (via C-terminus). It depends on Mg(2+) as a cofactor. Requires Mn(2+) as cofactor.

The catalysed reaction is O-phospho-L-seryl-[protein] + H2O = L-seryl-[protein] + phosphate. It carries out the reaction O-phospho-L-threonyl-[protein] + H2O = L-threonyl-[protein] + phosphate. With respect to regulation, inhibited by sodium fluoride (NaF). Protein phosphatase that modulates defense response to pathogenic bacteria, conferring resistance and promoting salicylic acid (SA) accumulation. This Arabidopsis thaliana (Mouse-ear cress) protein is Probable protein phosphatase 2C 59 (WIN2).